The following is a 1007-amino-acid chain: Glutamate receptor ionotropic, delta-2 (1007 aa).

The signal sequence occupies residues 1-23; that stretch reads MEVFPLLLFLSFCWSRTWDLATA. Positions 24–345 are interaction with CBLN1 homotrimer; sequence DSIIHIGAIF…NAFHKKLEDR (322 aa). Over 24–566 the chain is Extracellular; the sequence is DSIIHIGAIF…DMFACLAPFD (543 aa). Intrachain disulfides connect Cys-83–Cys-355, Cys-99–Cys-131, and Cys-298–Cys-310. An N-linked (GlcNAc...) asparagine glycan is attached at Asn-293. N-linked (GlcNAc...) asparagine glycosylation occurs at Asn-426. Ca(2+) is bound by residues Glu-531, Val-534, and Asp-535. A helical transmembrane segment spans residues 567 to 587; that stretch reads LSLWACIAGTVLLVGLLVYLL. The Cytoplasmic portion of the chain corresponds to 588–635; sequence NWLNPPRLQMGSMTSTTLYNSMWFVYGSFVQQGGEVPYTTLATRMMMG. The helical transmembrane segment at 636–656 threads the bilayer; sequence AWWLFALIVISSYTANLAAFL. The Extracellular portion of the chain corresponds to 657 to 830; it reads TITRIESSIQ…QKGGALDIKS (174 aa). 2 N-linked (GlcNAc...) asparagine glycosylation sites follow: Asn-713 and Asn-716. Ca(2+)-binding residues include Asp-753, Asp-755, and Ser-757. Residues 831–851 form a helical membrane-spanning segment; sequence LAGVFCILAAGIVLSCLIAVL. At 852-1007 the chain is on the cytoplasmic side; the sequence is ETWWSRRKGS…GNDPDRGTSI (156 aa). Residue Ser-883 is modified to Phosphoserine. Thr-886 bears the Phosphothreonine mark. Ser-890 carries the phosphoserine modification. Residues 921 to 991 are interaction with AP4M1; it reads DFRNTHITTT…MSSIPYQPTP (71 aa). The PDZ-binding signature appears at 1005 to 1007; the sequence is TSI. Ser-1006 is subject to Phosphoserine.

It belongs to the glutamate-gated ion channel (TC 1.A.10.1) family. GRID2 subfamily. In terms of assembly, tetramer; dimer of dimers. Interacts with EML2, MAGI2 (via PDZ domains) and AP4M1. Interacts with BECN1, GOPC, GRID2IP, SHANK1 and SHANK2. Interacts with CBLN2, but not with CBLN4. Interacts with CBLN1 (via C1q domain); the interaction is CBLN1-NRX1 complex formation-dependent; CBLN1-binding is calcium-independent; CBLN1 hexamers anchor GRID2 N-terminal domain dimers to monomeric NRXN1 isoform beta; promotes synaptogenesis and mediates the D-Serine-dependent long term depression signals and AMPA receptor endocytosis. As to expression, expressed selectively in cerebellar Purkinje cells where it is localized in dendritic spines.

The protein resides in the postsynaptic cell membrane. It carries out the reaction Ca(2+)(in) = Ca(2+)(out). The enzyme catalyses Na(+)(in) = Na(+)(out). Its function is as follows. Member of the ionotropic glutamate receptor family, which plays a crucial role in synaptic organization and signal transduction in the central nervous system. Although it shares structural features with ionotropic glutamate receptors, does not bind glutamate as a primary ligand. Promotes synaptogenesis and mediates the D-Serine-dependent long term depression signals and AMPA receptor endocytosis of cerebellar parallel fiber-Purkinje cell (PF-PC) synapses through the NRX1B-CBLN1-GRID2 triad complex. In the presence of neurexins and cerebellins, forms cation-selective channels that are proposed to be gated by glycine and D-serine. However, recent research disputes this ligand-gated cation channel activity. Cation-selective ion channel activity can be triggered by GRM1 in Purkinje cells. In Mus musculus (Mouse), this protein is Glutamate receptor ionotropic, delta-2 (Grid2).